Reading from the N-terminus, the 349-residue chain is Divinyl chlorophyll a/b light-harvesting protein PcbA (349 aa).

6 consecutive transmembrane segments (helical) span residues Phe27–Leu47, Val57–Phe77, Val89–Met109, Val202–Ala222, Ala242–Ser262, and Leu304–Leu324.

It belongs to the PsbB/PsbC family. IsiA/Pcb subfamily. The antenna complex consists of divinyl chlorophylls (a and b) and divinyl chlorophyll a/b binding proteins and binds more divinyl chlorophyll b than does the antenna complex from high-light-adapted Prochlorococcus. Divinyl chlorophyll a serves as cofactor. The cofactor is divinyl chlorophyll b.

It is found in the cellular thylakoid membrane. The antenna complex functions as a light receptor, it captures and delivers excitation energy to photosystems II and I. The Prochlorales pcb genes are not related to higher plant LHCs. In Prochlorococcus marinus (strain NATL2A), this protein is Divinyl chlorophyll a/b light-harvesting protein PcbA (pcbA).